Consider the following 305-residue polypeptide: Suppressor of activated egl-4 protein 2 (305 aa).

Residues 138 to 168 (KRGYESDSSDVSGVSHCSDAKRRRGRPRKDE) are disordered. Residues 158–170 (KRRRGRPRKDEEA) constitute a DNA-binding region (a.T hook).

In terms of assembly, interacts with phosphorylated egl-4. May interact with itself. May be a component of a histone deacetylase complex containing saeg-2, saeg-1 and hda-2. In terms of tissue distribution, ubiquitously expressed.

It localises to the nucleus. Its function is as follows. As a likely component of a histone deacetylase complex, together with saeg-1 and hda-2, functions downstream of the cAMP-dependent kinase egl-4 to regulate the expression of genes required for egg-laying and foraging. The polypeptide is Suppressor of activated egl-4 protein 2 (Caenorhabditis elegans).